Reading from the N-terminus, the 78-residue chain is uncharacterized protein (78 aa).

A helical membrane pass occupies residues 21–43 (SPFLFGAPLVGGLLGGFLGSALF).

It localises to the membrane. This is an uncharacterized protein from Bacillus subtilis (strain 168).